Reading from the N-terminus, the 324-residue chain is Glyoxylate/hydroxypyruvate reductase B (324 aa).

Catalysis depends on residues R237 and E266. Residue H285 is the Proton donor of the active site.

This sequence belongs to the D-isomer specific 2-hydroxyacid dehydrogenase family. GhrB subfamily. In terms of assembly, homodimer.

Its subcellular location is the cytoplasm. It carries out the reaction glycolate + NADP(+) = glyoxylate + NADPH + H(+). The enzyme catalyses (R)-glycerate + NAD(+) = 3-hydroxypyruvate + NADH + H(+). It catalyses the reaction (R)-glycerate + NADP(+) = 3-hydroxypyruvate + NADPH + H(+). In terms of biological role, catalyzes the NADPH-dependent reduction of glyoxylate and hydroxypyruvate into glycolate and glycerate, respectively. In Escherichia coli (strain SMS-3-5 / SECEC), this protein is Glyoxylate/hydroxypyruvate reductase B.